Consider the following 121-residue polypeptide: Glycine cleavage system H protein (121 aa).

In terms of domain architecture, Lipoyl-binding spans 16–98; sequence VATVGITAYA…ESGGWFAKIK (83 aa). An N6-lipoyllysine modification is found at K57.

This sequence belongs to the GcvH family. In terms of assembly, the glycine cleavage system is composed of four proteins: P, T, L and H. The cofactor is (R)-lipoate.

The glycine cleavage system catalyzes the degradation of glycine. The H protein shuttles the methylamine group of glycine from the P protein to the T protein. This chain is Glycine cleavage system H protein, found in Caulobacter vibrioides (strain NA1000 / CB15N) (Caulobacter crescentus).